Consider the following 305-residue polypeptide: MKMKKSLVALCLTAGLFASVPGISLAEVNYVPQNTSAAPVIPAAALQQLTWTPVDQSKTQSTQLATGGQRLDVAGITGPVAAYSVPANIGELTLTLTSEVNKQASVFAPNVLILDQNMTPSAFFPSSYFTYQQPGVMSADRLEGVMRLTPALGQQKLYVLVFTTEKDLQQTTTLLDPAKAYAKGVGNSIPDIPDPVARHTTDGVVKLKVKTNSSSSVLVGPLFGSSGTGPVTVGNTAAPVAAPAPVAPKKSEPMLNDTESYFNKAIKDAVAKGDVDKALKLLDEAERLGSTSARSTFISSVKGKG.

Residues 1–22 (MKMKKSLVALCLTAGLFASVPG) constitute a signal peptide (or 26).

It to E.coli MalM.

The protein resides in the periplasm. Functionally, not yet known. Might function in the uptake of a still unidentified substrate. The sequence is that of Maltose operon periplasmic protein (malM) from Salmonella typhimurium (strain LT2 / SGSC1412 / ATCC 700720).